A 208-amino-acid polypeptide reads, in one-letter code: Protein-methionine-sulfoxide reductase heme-binding subunit MsrQ (208 aa).

6 helical membrane passes run 16 to 36 (IAVF…FVGG), 53 to 73 (WGLI…LWGW), 82 to 102 (MVGL…IGLD), 118 to 138 (TYIT…VTST), 156 to 176 (LVYP…KADL), and 178 to 198 (EPLI…VPAV).

This sequence belongs to the MsrQ family. In terms of assembly, heterodimer of a catalytic subunit (MsrP) and a heme-binding subunit (MsrQ). Requires FMN as cofactor. The cofactor is heme b.

The protein localises to the cell inner membrane. Functionally, part of the MsrPQ system that repairs oxidized periplasmic proteins containing methionine sulfoxide residues (Met-O), using respiratory chain electrons. Thus protects these proteins from oxidative-stress damage caused by reactive species of oxygen and chlorine generated by the host defense mechanisms. MsrPQ is essential for the maintenance of envelope integrity under bleach stress, rescuing a wide series of structurally unrelated periplasmic proteins from methionine oxidation. MsrQ provides electrons for reduction to the reductase catalytic subunit MsrP, using the quinone pool of the respiratory chain. This Rhodospirillum rubrum (strain ATCC 11170 / ATH 1.1.1 / DSM 467 / LMG 4362 / NCIMB 8255 / S1) protein is Protein-methionine-sulfoxide reductase heme-binding subunit MsrQ.